We begin with the raw amino-acid sequence, 88 residues long: Homeobox protein knotted-1-like 2 (88 aa).

The ELK domain occupies 4-24 (ELKHELKQGYRDKLVDIREEI). Residues 25 to 88 (LRKRRAGKLP…NQRKRNWHNN (64 aa)) constitute a DNA-binding region (homeobox; TALE-type).

This sequence belongs to the TALE/KNOX homeobox family. In terms of tissue distribution, expressed in all tissues examined. Highest expression in leaves.

The protein localises to the nucleus. The sequence is that of Homeobox protein knotted-1-like 2 (KNOX2) from Zea mays (Maize).